A 450-amino-acid polypeptide reads, in one-letter code: Methionine aminopeptidase 2-2 (450 aa).

2 stretches are compositionally biased toward basic and acidic residues: residues 1–10 and 30–39; these read MGAKISEDHP and RGAHLSRDGD. The tract at residues 1-100 is disordered; it reads MGAKISEDHP…PPRVPLSELF (100 aa). The segment covering 47 to 56 has biased composition (acidic residues); that stretch reads GDDDDDDDEG. The segment covering 69–86 has biased composition (basic residues); it reads KKKKKKRKPKKKKAKKAT. A substrate-binding site is contributed by histidine 211. 3 residues coordinate a divalent metal cation: aspartate 232, aspartate 243, and histidine 302. Histidine 310 lines the substrate pocket. A divalent metal cation is bound by residues glutamate 335 and glutamate 431.

This sequence belongs to the peptidase M24A family. Methionine aminopeptidase eukaryotic type 2 subfamily. Co(2+) is required as a cofactor. It depends on Zn(2+) as a cofactor. Requires Mn(2+) as cofactor. The cofactor is Fe(2+).

It is found in the cytoplasm. It carries out the reaction Release of N-terminal amino acids, preferentially methionine, from peptides and arylamides.. Functionally, cotranslationally removes the N-terminal methionine from nascent proteins. The N-terminal methionine is often cleaved when the second residue in the primary sequence is small and uncharged (Met-Ala-, Cys, Gly, Pro, Ser, Thr, or Val). The polypeptide is Methionine aminopeptidase 2-2 (Fusarium vanettenii (strain ATCC MYA-4622 / CBS 123669 / FGSC 9596 / NRRL 45880 / 77-13-4) (Fusarium solani subsp. pisi)).